The sequence spans 508 residues: Catalase (508 aa).

Positions 1–21 are cleaved as a signal peptide; that stretch reads MHMSKSFLLISMGLASISVHA. Residues His72 and Asn145 contribute to the active site. Heme is bound at residue Tyr353. Residues 373-392 show a composition bias toward polar residues; sequence PKSPVANHNQDGPSNNSTGL. The disordered stretch occupies residues 373–396; that stretch reads PKSPVANHNQDGPSNNSTGLGNVD.

The protein belongs to the catalase family. The cofactor is heme.

The protein localises to the periplasm. The enzyme catalyses 2 H2O2 = O2 + 2 H2O. In terms of biological role, decomposes hydrogen peroxide into water and oxygen; serves to protect cells from the toxic effects of hydrogen peroxide. The chain is Catalase from Vibrio vulnificus (strain CMCP6).